The chain runs to 329 residues: Phosphoenolpyruvate transferase (329 aa).

7,8-didemethyl-8-hydroxy-5-deazariboflavin is bound at residue Asp-61.

Belongs to the CofD family. In terms of assembly, homodimer. Mg(2+) serves as cofactor.

The catalysed reaction is enolpyruvoyl-2-diphospho-5'-guanosine + 7,8-didemethyl-8-hydroxy-5-deazariboflavin = dehydro coenzyme F420-0 + GMP + H(+). It functions in the pathway cofactor biosynthesis; coenzyme F420 biosynthesis. Functionally, catalyzes the transfer of the phosphoenolpyruvate moiety from enoylpyruvoyl-2-diphospho-5'-guanosine (EPPG) to 7,8-didemethyl-8-hydroxy-5-deazariboflavin (FO) with the formation of dehydro coenzyme F420-0 and GMP. The chain is Phosphoenolpyruvate transferase from Mycobacterium ulcerans (strain Agy99).